Here is a 424-residue protein sequence, read N- to C-terminus: Hemagglutinin-esterase (424 aa).

2 consecutive signal peptides follow at residues 1-16 and 1-18; these read MFLL…IIGS and MFLL…GSLG. The tract at residues 7-127 is esterase domain 1; the sequence is FVLVSCIIGS…SNDIWMQNKG (121 aa). At 17–392 the chain is on the virion surface side; sequence LGFDNPPTNV…PICVYDPLPL (376 aa). Ser40 acts as the Nucleophile in catalysis. Cysteines 44 and 65 form a disulfide. 5 N-linked (GlcNAc...) asparagine; by host glycosylation sites follow: Asn54, Asn89, Asn153, Asn236, and Asn301. 3 cysteine pairs are disulfide-bonded: Cys113-Cys162, Cys197-Cys276, and Cys205-Cys249. A receptor binding region spans residues 128–266; the sequence is LFYTQVYKNM…GNYLAISNEL (139 aa). Positions 267 to 379 are esterase domain 2; the sequence is LLTVPTKAIC…RCPTAADINT (113 aa). A disulfide bridge links Cys307 with Cys312. N-linked (GlcNAc...) asparagine; by host glycosylation occurs at Asn316. Residues Asp326 and His329 each act as charge relay system in the active site. Cys347 and Cys371 form a disulfide bridge. Asn358 is a glycosylation site (N-linked (GlcNAc...) asparagine; by host). Residues 393–413 traverse the membrane as a helical segment; it reads ILLGILLGVAVIIIVVLLLYF. The Intravirion segment spans residues 414 to 424; the sequence is MVDNGTRLHDA. The N-linked (GlcNAc...) asparagine; by host glycan is linked to Asn417.

Belongs to the influenza type C/coronaviruses hemagglutinin-esterase family. As to quaternary structure, homodimer; disulfide-linked. Forms a complex with the M protein in the pre-Golgi. Associates then with S-M complex to form a ternary complex S-M-HE. In terms of processing, N-glycosylated in the host RER.

The protein localises to the virion membrane. The protein resides in the host cell membrane. The enzyme catalyses N-acetyl-9-O-acetylneuraminate + H2O = N-acetylneuraminate + acetate + H(+). The catalysed reaction is N-acetyl-4-O-acetylneuraminate + H2O = N-acetylneuraminate + acetate + H(+). In terms of biological role, structural protein that makes short spikes at the surface of the virus. Contains receptor binding and receptor-destroying activities. Mediates de-O-acetylation of N-acetyl-4-O-acetylneuraminic acid, which is probably the receptor determinant recognized by the virus on the surface of erythrocytes and susceptible cells. This receptor-destroying activity is important for virus release as it probably helps preventing self-aggregation and ensures the efficient spread of the progeny virus from cell to cell. May serve as a secondary viral attachment protein for initiating infection, the spike protein being the major one. May become a target for both the humoral and the cellular branches of the immune system. The chain is Hemagglutinin-esterase from Bos taurus (Bovine).